A 1172-amino-acid chain; its full sequence is Nuclear exosome regulator NRDE2 (1172 aa).

Ala2 is modified (N-acetylalanine). The segment at 46–144 (VTALASEGSP…KEAEKPCQGS (99 aa)) is disordered. Residues 71-83 (SGESNTSEKLAQT) are compositionally biased toward polar residues. A coiled-coil region spans residues 78-330 (EKLAQTSRKK…EEFNRRVREN (253 aa)). Residues 84-107 (SRKKKKEKKKRRKHQHHRKTKRRH) are compositionally biased toward basic residues. Residues 120–139 (EAGKDRASRSIRDDQKEAEK) show a composition bias toward basic and acidic residues. The interval 171-275 (FRTDKKPDPA…DSAEAATPVT (105 aa)) is MID/MTR4-interacting domain. A disordered region spans residues 292–313 (LQGQGPAEQESKQPDSQQDREN). A compositionally biased stretch (basic and acidic residues) spans 300-313 (QESKQPDSQQDREN). HAT repeat units lie at residues 314-346 (AALK…FQDE), 404-436 (WEPS…FCQS), 766-800 (SQGK…LEWL), 986-1018 (YPLA…IQNK), and 1075-1109 (GLTH…FLVS).

The protein belongs to the NRDE2 family. As to quaternary structure, interacts with MTREX; the interaction is direct and stabilizes NRDE2. Interacts with EXOSC10, EFTUD2 and EIF4A3.

Its subcellular location is the nucleus speckle. The protein resides in the nucleus. The protein localises to the nucleolus. It localises to the nucleoplasm. Its function is as follows. Protein of the nuclear speckles that regulates RNA degradation and export from the nucleus through its interaction with MTREX an essential factor directing various RNAs to exosomal degradation. Changes the conformation of MTREX, precluding its association with the nuclear exosome and interaction with proteins required for its function in RNA exosomal degradation. Negatively regulates, for instance, the degradation of mRNAs and lncRNAs by inhibiting their MTREX-mediated recruitment to nuclear exosome. By preventing the degradation of RNAs in the nucleus, it promotes their export to the cytoplasm. U5 snRNP-associated RNA splicing factor which is required for efficient splicing of CEP131 pre-mRNA and plays an important role in centrosome maturation, integrity and function during mitosis. Suppresses intron retention in a subset of pre-mRNAs containing short, GC-rich introns with relatively weak 5' and 3' splice sites. Plays a role in DNA damage response. The chain is Nuclear exosome regulator NRDE2 (Nrde2) from Mus musculus (Mouse).